The sequence spans 170 residues: Putative invertase inhibitor (170 aa).

Positions 1-14 (MKLSFSLCIFFLIS) are cleaved as a signal peptide. Intrachain disulfides connect Cys-22–Cys-37 and Cys-93–Cys-133.

The protein belongs to the PMEI family. Expressed in pollen (at protein level). Expressed in pollen.

The protein is Putative invertase inhibitor of Platanus orientalis (Oriental plane-tree).